Reading from the N-terminus, the 111-residue chain is SPbeta prophage-derived uncharacterized protein YolC (111 aa).

Positions methionine 1–alanine 25 are cleaved as a signal peptide.

This Bacillus subtilis (strain 168) protein is SPbeta prophage-derived uncharacterized protein YolC (yolC).